The chain runs to 261 residues: MEPRGEKSGEADGVRVTPQLLKARSGEFALESILLLKLRGLGLVGLGCLGDCLGLEWLDLSGNALTQLGPLASLRQLAVLNVADNRLTGLEPLAACENLQCLNAAGNLLAGPAQLQCLAGLRGLERLRLRDPLARLSNPLCASPCYWASVRELLPGLKVLDGERVSGRGSDFYQLCRDLDSSLSPDPGAPGPRPMEAQPWVEPGYWEALPPRSSSILEEACRQFQDTLQECHDLDRQAWDSLAQAMRALSPAGATAASFVF.

LRR repeat units follow at residues 54–75 (GLEW…ASLR), 76–97 (QLAV…AACE), and 98–119 (NLQC…QCLA). The 46-residue stretch at 138 to 183 (NPLCASPCYWASVRELLPGLKVLDGERVSGRGSDFYQLCRDLDSSL) folds into the LRRCT domain.

In Bos taurus (Bovine), this protein is Leucine-rich repeat-containing protein 61 (LRRC61).